The following is a 54-amino-acid chain: Small ribosomal subunit protein uS14 (54 aa).

Residues cysteine 19, cysteine 22, cysteine 37, and cysteine 40 each coordinate Zn(2+).

This sequence belongs to the universal ribosomal protein uS14 family. Zinc-binding uS14 subfamily. In terms of assembly, part of the 30S ribosomal subunit. The cofactor is Zn(2+).

In terms of biological role, binds 16S rRNA, required for the assembly of 30S particles. The polypeptide is Small ribosomal subunit protein uS14 (Aeropyrum pernix (strain ATCC 700893 / DSM 11879 / JCM 9820 / NBRC 100138 / K1)).